A 532-amino-acid chain; its full sequence is Pre-rRNA-processing protein pro-1 (532 aa).

WD repeat units follow at residues 136 to 175 (AHYQ…SADR) and 287 to 326 (GHSD…CLKV). A disordered region spans residues 435–464 (TLGDDEDDAPEVGNQRRQNKKNNKKNRKLQ). Positions 445–526 (EVGNQRRQNK…INRQMYEFVA (82 aa)) form a coiled coil. Residues 451–464 (RQNKKNNKKNRKLQ) are compositionally biased toward basic residues.

This sequence belongs to the WD repeat IPI3/WDR18 family. Component of the PELP1 complex, composed of at least PELP1, TEX10 and WDR18. The complex interacts with pre-60S ribosome particles.

It is found in the nucleus. The protein resides in the nucleolus. The protein localises to the nucleoplasm. Its function is as follows. Component of the PELP1 complex involved in the nucleolar steps of 28S rRNA maturation and the subsequent nucleoplasmic transit of the pre-60S ribosomal subunit. Required for processing ITS2 sequences from rRNA intermediates during 26S rRNA maturation. Required in the soma to promote normal proliferation and prevent germline tumor formation. The sequence is that of Pre-rRNA-processing protein pro-1 (pro-1) from Caenorhabditis briggsae.